Here is a 202-residue protein sequence, read N- to C-terminus: Outer-membrane lipoprotein carrier protein (202 aa).

The first 18 residues, 1–18, serve as a signal peptide directing secretion; it reads MNKLFLILLLIFSHEVFS.

The protein belongs to the LolA family. In terms of assembly, monomer.

It localises to the periplasm. Functionally, participates in the translocation of lipoproteins from the inner membrane to the outer membrane. Only forms a complex with a lipoprotein if the residue after the N-terminal Cys is not an aspartate (The Asp acts as a targeting signal to indicate that the lipoprotein should stay in the inner membrane). The polypeptide is Outer-membrane lipoprotein carrier protein (Legionella pneumophila (strain Corby)).